A 113-amino-acid polypeptide reads, in one-letter code: Ribonuclease P protein component (113 aa).

The span at 1–10 (MLPTRHRMRT) shows a compositional bias: basic residues. The segment at 1–23 (MLPTRHRMRTSAHFSTTVRSGAR) is disordered.

This sequence belongs to the RnpA family. As to quaternary structure, consists of a catalytic RNA component (M1 or rnpB) and a protein subunit.

The enzyme catalyses Endonucleolytic cleavage of RNA, removing 5'-extranucleotides from tRNA precursor.. Its function is as follows. RNaseP catalyzes the removal of the 5'-leader sequence from pre-tRNA to produce the mature 5'-terminus. It can also cleave other RNA substrates such as 4.5S RNA. The protein component plays an auxiliary but essential role in vivo by binding to the 5'-leader sequence and broadening the substrate specificity of the ribozyme. This is Ribonuclease P protein component from Kocuria rhizophila (strain ATCC 9341 / DSM 348 / NBRC 103217 / DC2201).